We begin with the raw amino-acid sequence, 596 residues long: Elongation factor 4 (596 aa).

The tr-type G domain occupies 2-183; it reads KNIRNFSIIA…AIVRRVPAPD (182 aa). GTP contacts are provided by residues 14-19 and 130-133; these read DHGKST and NKID.

The protein belongs to the TRAFAC class translation factor GTPase superfamily. Classic translation factor GTPase family. LepA subfamily.

It localises to the cell inner membrane. The catalysed reaction is GTP + H2O = GDP + phosphate + H(+). Its function is as follows. Required for accurate and efficient protein synthesis under certain stress conditions. May act as a fidelity factor of the translation reaction, by catalyzing a one-codon backward translocation of tRNAs on improperly translocated ribosomes. Back-translocation proceeds from a post-translocation (POST) complex to a pre-translocation (PRE) complex, thus giving elongation factor G a second chance to translocate the tRNAs correctly. Binds to ribosomes in a GTP-dependent manner. The protein is Elongation factor 4 of Campylobacter curvus (strain 525.92).